Here is a 172-residue protein sequence, read N- to C-terminus: 2S seed storage-like protein (172 aa).

Residues methionine 1–glycine 35 form the signal peptide. The tract at residues phenylalanine 108 to lysine 172 is disordered. The segment covering glutamate 151 to arginine 160 has biased composition (basic and acidic residues).

It belongs to the 2S seed storage albumins family.

In Picea glauca (White spruce), this protein is 2S seed storage-like protein.